The sequence spans 135 residues: Small ribosomal subunit protein uS11 (135 aa).

Belongs to the universal ribosomal protein uS11 family. In terms of assembly, part of the 30S ribosomal subunit. Interacts with proteins S7 and S18. Binds to IF-3.

In terms of biological role, located on the platform of the 30S subunit, it bridges several disparate RNA helices of the 16S rRNA. Forms part of the Shine-Dalgarno cleft in the 70S ribosome. This is Small ribosomal subunit protein uS11 from Polynucleobacter asymbioticus (strain DSM 18221 / CIP 109841 / QLW-P1DMWA-1) (Polynucleobacter necessarius subsp. asymbioticus).